The chain runs to 88 residues: Small ribosomal subunit protein bS18B (88 aa).

Belongs to the bacterial ribosomal protein bS18 family. Part of the 30S ribosomal subunit. Forms a tight heterodimer with protein bS6.

Its function is as follows. Binds as a heterodimer with protein bS6 to the central domain of the 16S rRNA, where it helps stabilize the platform of the 30S subunit. The protein is Small ribosomal subunit protein bS18B of Mycolicibacterium paratuberculosis (strain ATCC BAA-968 / K-10) (Mycobacterium paratuberculosis).